A 46-amino-acid chain; its full sequence is Large ribosomal subunit protein bL36 (46 aa).

Belongs to the bacterial ribosomal protein bL36 family.

In Serratia proteamaculans (strain 568), this protein is Large ribosomal subunit protein bL36.